Here is a 72-residue protein sequence, read N- to C-terminus: Small ribosomal subunit protein bS18c (72 aa).

The protein belongs to the bacterial ribosomal protein bS18 family. As to quaternary structure, part of the 30S ribosomal subunit.

It localises to the plastid. The protein localises to the chloroplast. The chain is Small ribosomal subunit protein bS18c from Emiliania huxleyi (Coccolithophore).